We begin with the raw amino-acid sequence, 249 residues long: ATP synthase subunit a (249 aa).

6 helical membrane-spanning segments follow: residues 26–46 (FTNSSLFMVATVAAAGAFLYL), 84–104 (FFPFVFSLFMFVLVANLLGLF), 114–134 (IVVTFALALLVIGTVLVYGFW), 143–163 (LFVPEGVPGVLLPLVVLIEVI), 185–205 (ITLKVFAGFVTSLGALGVAGA), and 208–228 (AVLPLAMTVALTGLELLVAFL).

It belongs to the ATPase A chain family. As to quaternary structure, F-type ATPases have 2 components, CF(1) - the catalytic core - and CF(0) - the membrane proton channel. CF(1) has five subunits: alpha(3), beta(3), gamma(1), delta(1), epsilon(1). CF(0) has three main subunits: a(1), b(2) and c(9-12). The alpha and beta chains form an alternating ring which encloses part of the gamma chain. CF(1) is attached to CF(0) by a central stalk formed by the gamma and epsilon chains, while a peripheral stalk is formed by the delta and b chains.

The protein localises to the cell inner membrane. Key component of the proton channel; it plays a direct role in the translocation of protons across the membrane. The polypeptide is ATP synthase subunit a (Chelativorans sp. (strain BNC1)).